The chain runs to 361 residues: Putative agmatine deiminase (361 aa).

The Amidino-cysteine intermediate role is filled by cysteine 354.

It belongs to the agmatine deiminase family.

It carries out the reaction agmatine + H2O = N-carbamoylputrescine + NH4(+). This is Putative agmatine deiminase from Streptococcus pneumoniae (strain 70585).